The chain runs to 423 residues: Gamma-glutamyl phosphate reductase (423 aa).

The protein belongs to the gamma-glutamyl phosphate reductase family.

Its subcellular location is the cytoplasm. It carries out the reaction L-glutamate 5-semialdehyde + phosphate + NADP(+) = L-glutamyl 5-phosphate + NADPH + H(+). The protein operates within amino-acid biosynthesis; L-proline biosynthesis; L-glutamate 5-semialdehyde from L-glutamate: step 2/2. Functionally, catalyzes the NADPH-dependent reduction of L-glutamate 5-phosphate into L-glutamate 5-semialdehyde and phosphate. The product spontaneously undergoes cyclization to form 1-pyrroline-5-carboxylate. This is Gamma-glutamyl phosphate reductase from Pseudomonas fluorescens (strain Pf0-1).